Reading from the N-terminus, the 155-residue chain is Endoribonuclease YbeY (155 aa).

3 residues coordinate Zn(2+): H120, H124, and H130.

The protein belongs to the endoribonuclease YbeY family. Zn(2+) is required as a cofactor.

The protein resides in the cytoplasm. Its function is as follows. Single strand-specific metallo-endoribonuclease involved in late-stage 70S ribosome quality control and in maturation of the 3' terminus of the 16S rRNA. The protein is Endoribonuclease YbeY of Staphylococcus epidermidis (strain ATCC 35984 / DSM 28319 / BCRC 17069 / CCUG 31568 / BM 3577 / RP62A).